A 325-amino-acid chain; its full sequence is Cytochrome c biogenesis protein CcsA (325 aa).

Transmembrane regions (helical) follow at residues 14 to 34, 36 to 56, 68 to 88, 97 to 117, 142 to 162, 233 to 253, 260 to 280, and 294 to 314; these read TFAI…FPNL, GLPA…AALL, ISNL…IHLL, LVGA…AFTL, VMMV…AFLV, VIGL…VWAN, WSWD…AAYL, and AILA…VNLL.

The protein belongs to the CcmF/CycK/Ccl1/NrfE/CcsA family. May interact with ccs1.

It localises to the cellular thylakoid membrane. Required during biogenesis of c-type cytochromes (cytochrome c6 and cytochrome f) at the step of heme attachment. The sequence is that of Cytochrome c biogenesis protein CcsA from Synechococcus sp. (strain ATCC 27144 / PCC 6301 / SAUG 1402/1) (Anacystis nidulans).